A 308-amino-acid polypeptide reads, in one-letter code: Urease accessory protein UreD (308 aa).

The protein belongs to the UreD family. In terms of assembly, ureD, UreF and UreG form a complex that acts as a GTP-hydrolysis-dependent molecular chaperone, activating the urease apoprotein by helping to assemble the nickel containing metallocenter of UreC. The UreE protein probably delivers the nickel.

The protein resides in the cytoplasm. Required for maturation of urease via the functional incorporation of the urease nickel metallocenter. In Psychromonas ingrahamii (strain DSM 17664 / CCUG 51855 / 37), this protein is Urease accessory protein UreD.